Here is a 1185-residue protein sequence, read N- to C-terminus: Zinc finger SWIM domain-containing protein 5 (1185 aa).

The segment covering 1–10 (MADGGEREEL) has biased composition (basic and acidic residues). 2 disordered regions span residues 1–45 (MADG…GGAG) and 123–153 (AGAA…GSAP). Residues 219-256 (YKVAISFDRCKITSVTCGCGNKDIFYCAHVVALSLYRI) form an SWIM-type zinc finger.

This Homo sapiens (Human) protein is Zinc finger SWIM domain-containing protein 5 (ZSWIM5).